Consider the following 881-residue polypeptide: Glutamate--tRNA ligase (881 aa).

Residues methionine 1 to glutamine 480 are glutamyl-tRNA synthetase. Positions proline 9–threonine 19 match the 'HIGH' region motif. The short motif at lysine 248–arginine 252 is the 'KMSKS' region element. Lysine 251 contributes to the ATP binding site. The tract at residues glutamate 481 to serine 881 is unknown. Residues glutamate 488–glycine 502 are compositionally biased toward basic and acidic residues. The interval glutamate 488–glutamate 747 is disordered. The segment covering glutamine 522–threonine 548 has biased composition (low complexity). Over residues glutamate 549 to isoleucine 562 the composition is skewed to polar residues. Positions threonine 563–threonine 576 are enriched in low complexity. The segment covering glutamate 577 to isoleucine 590 has biased composition (polar residues). Positions threonine 591–threonine 604 are enriched in low complexity. Polar residues predominate over residues glutamate 605 to isoleucine 618. The segment covering threonine 619–threonine 632 has biased composition (low complexity). Over residues glutamate 633–isoleucine 646 the composition is skewed to polar residues. Residues threonine 647 to threonine 660 show a composition bias toward low complexity. Residues glutamate 661–isoleucine 674 are compositionally biased toward polar residues. The segment covering threonine 675–threonine 688 has biased composition (low complexity). Residues glutamate 689–isoleucine 702 show a composition bias toward polar residues. Over residues threonine 703–serine 720 the composition is skewed to low complexity. The segment covering valine 721–isoleucine 730 has biased composition (polar residues). Residues threonine 731 to aspartate 742 show a composition bias toward low complexity. 2 helical membrane passes run leucine 809 to alanine 829 and glycine 832 to valine 852.

Belongs to the class-I aminoacyl-tRNA synthetase family. Glutamate--tRNA ligase type 1 subfamily. Monomer.

It is found in the cytoplasm. The protein resides in the cell membrane. The enzyme catalyses tRNA(Glu) + L-glutamate + ATP = L-glutamyl-tRNA(Glu) + AMP + diphosphate. In terms of biological role, catalyzes the attachment of glutamate to tRNA(Glu) in a two-step reaction: glutamate is first activated by ATP to form Glu-AMP and then transferred to the acceptor end of tRNA(Glu). In Trichodesmium erythraeum (strain IMS101), this protein is Glutamate--tRNA ligase (gltX).